A 67-amino-acid chain; its full sequence is Large ribosomal subunit protein uL29 (67 aa).

It belongs to the universal ribosomal protein uL29 family.

The protein is Large ribosomal subunit protein uL29 of Ehrlichia canis (strain Jake).